The chain runs to 124 residues: UPF0102 protein Haur_0145 (124 aa).

The protein belongs to the UPF0102 family.

This Herpetosiphon aurantiacus (strain ATCC 23779 / DSM 785 / 114-95) protein is UPF0102 protein Haur_0145.